A 353-amino-acid chain; its full sequence is Melatonin receptor type 1A (353 aa).

Residues M1–A15 show a composition bias toward polar residues. The segment at M1 to G23 is disordered. The Extracellular segment spans residues M1 to T32. N-linked (GlcNAc...) asparagine glycans are attached at residues N4 and N10. A helical transmembrane segment spans residues L33–L53. The Cytoplasmic segment spans residues S54 to N66. A helical membrane pass occupies residues I67–V87. At L88 to I105 the chain is on the extracellular side. Cysteines 103 and 180 form a disulfide. The helical transmembrane segment at S106 to I126 threads the bilayer. Topologically, residues N127–S147 are cytoplasmic. The helical transmembrane segment at L148 to T168 threads the bilayer. Residues G169 to Y190 lie on the Extracellular side of the membrane. A helical transmembrane segment spans residues T191–L211. At R212–M243 the chain is on the cytoplasmic side. A helical membrane pass occupies residues F244–V264. The Extracellular segment spans residues A265–E277. Residues W278–Y298 traverse the membrane as a helical segment. Residues G299 to V353 lie on the Cytoplasmic side of the membrane.

It belongs to the G-protein coupled receptor 1 family. At least in the brain, more precisely in the pars tuberalis and the suprachiasmatic nucleus.

Its subcellular location is the cell membrane. Its function is as follows. High affinity receptor for melatonin. Likely to mediate the reproductive and circadian actions of melatonin. The activity of this receptor is mediated by pertussis toxin sensitive G proteins that inhibit adenylate cyclase activity. Possibly involved in sleep induction, by melatonin activation of the potassium channel KCNMA1/BK and the dissociation of G-beta and G-gamma subunits, thereby decreasing synaptic transmission. The polypeptide is Melatonin receptor type 1A (MTNR1A) (Phodopus sungorus (Striped hairy-footed hamster)).